Reading from the N-terminus, the 136-residue chain is ATP synthase epsilon chain (136 aa).

The protein belongs to the ATPase epsilon chain family. In terms of assembly, F-type ATPases have 2 components, CF(1) - the catalytic core - and CF(0) - the membrane proton channel. CF(1) has five subunits: alpha(3), beta(3), gamma(1), delta(1), epsilon(1). CF(0) has three main subunits: a, b and c.

Its subcellular location is the cell inner membrane. Its function is as follows. Produces ATP from ADP in the presence of a proton gradient across the membrane. In Myxococcus xanthus (strain DK1622), this protein is ATP synthase epsilon chain.